The following is a 298-amino-acid chain: Cyclic dof factor 1 (298 aa).

The disordered stretch occupies residues 27-46 (EEEEKNQNKTLTDQSEKDKT). Residues 54–108 (LPCPRCNSMETKFCYYNNYNVNQPRHFCKACQRYWTSGGTMRSVPIGAGRRKNKN) form a Dof-type zinc finger. Zn(2+)-binding residues include Cys56, Cys59, Cys81, and Cys84. Residues 200–231 (SSSPTSTLGKHSRDEDETVKQKQRNGSVLVPK) form a disordered region. Basic and acidic residues predominate over residues 210–219 (HSRDEDETVK).

As to quaternary structure, interacts with ADO2 (via kelch repeats), ADO3 (via kelch repeats) and GI (via N-terminus). Ubiquitinated. Expressed in the vascular tissues of cotyledons, leaves and hypocotyls and in stomata. Not detected in roots.

The protein localises to the nucleus. In terms of biological role, transcription factor that binds specifically to a 5'-AA[AG]G-3' consensus core sequence. A flanking TGT sequence contributes to the specificity of binding. Regulates a photoperiodic flowering response. Transcriptional repressor of 'CONSTANS' expression. The DNA-binding ability is not modulated by 'GIGANTEA' but the stability of CDF1 is controlled by the proteasome-dependent pathway. Ubiquitinated by the SCF(ADO3) E3 ubiquitin ligase complex. Binds to the FT promoter in the morning. In Arabidopsis thaliana (Mouse-ear cress), this protein is Cyclic dof factor 1 (CDF1).